The following is a 617-amino-acid chain: MKQSKMLIPTLREMPSDAQVISHALMVRAGYVRQVSAGIYAYLPLANRTIEKFKTIMRQEFEKIGAVEMLAPALLTADLWRESGRYETYGEDLYKLKNRDQSDFILGPTHEETFTTLVRDAVKSYKQLPLNLYQIQSKYRDEKRPRNGLLRTREFIMKDGYSFHKDYEDLDVTYEDYRKAYEAIFTRAGLDFKGIIGDGGAMGGKDSQEFMAVTPNRTDLNRWLVLDKTIPSIDDIPEDVLEEIKVELSAWLVSGEDTIAYSTESSYAANLEMATNEYKPSTKAATFEEVTKVETPNCKSIDEVAGFLSIDENQTIKTLLFIADEQPVVALLVGNDQVNDVKLKNYLAADFLEPASEEQAKEIFGAGFGSLGPVNLPDSVKIIADRKVQDLANAVSGANQDGYHFTGVNPERDFTAEYVDIREVKEGEISPDGKGTLKFARGIEIGHIFKLGTRYSDSMGANILDENGRSNPIVMGCYGIGVSRILSAVIEQHARLFVNKTPKGAYRFAWGINFPEELAPFDVHLITVNVKDQESQDLTEKIEADLMLKGYEVLTDDRNERVGSKFSDSDLIGLPIRVTVGKKASEGIVEVKIKASGDTIEVHADNLIETLEILTKK.

This sequence belongs to the class-II aminoacyl-tRNA synthetase family. ProS type 1 subfamily. Homodimer.

It is found in the cytoplasm. It catalyses the reaction tRNA(Pro) + L-proline + ATP = L-prolyl-tRNA(Pro) + AMP + diphosphate. Functionally, catalyzes the attachment of proline to tRNA(Pro) in a two-step reaction: proline is first activated by ATP to form Pro-AMP and then transferred to the acceptor end of tRNA(Pro). As ProRS can inadvertently accommodate and process non-cognate amino acids such as alanine and cysteine, to avoid such errors it has two additional distinct editing activities against alanine. One activity is designated as 'pretransfer' editing and involves the tRNA(Pro)-independent hydrolysis of activated Ala-AMP. The other activity is designated 'posttransfer' editing and involves deacylation of mischarged Ala-tRNA(Pro). The misacylated Cys-tRNA(Pro) is not edited by ProRS. This is Proline--tRNA ligase from Streptococcus agalactiae serotype V (strain ATCC BAA-611 / 2603 V/R).